The primary structure comprises 757 residues: Myb-related protein A (757 aa).

HTH myb-type domains are found at residues 30–81, 82–137, and 138–188; these read KKIC…QKVL, NPEL…NPEV, and KKSS…RRKV. 3 consecutive DNA-binding regions (H-T-H motif) follow at residues 58–81, 110–133, and 161–184; these read WAFI…QKVL, WSLI…HNHL, and WAEI…NSTM. The interval 187-209 is disordered; that stretch reads KVEQEGYLQDGTKSSSERTGSST. Polar residues predominate over residues 197-209; it reads GTKSSSERTGSST. Residues 235–300 are transcriptional activation domain; that stretch reads IPVYQYASPE…RLSSQAGSLP (66 aa). The tract at residues 303–558 is negative regulatory domain; the sequence is SGSFVMEDCV…IRRSLLGSTP (256 aa).

In terms of assembly, component of the DREAM complex. In terms of tissue distribution, expressed ubiquitously.

Its subcellular location is the nucleus. In terms of biological role, strong transcriptional activator; DNA-binding protein that specifically recognize the sequence 5'-YAAC[GT]G-3'. Could have a role in the proliferation and/or differentiation of neurogenic, spermatogenic and B-lymphoid cells. The sequence is that of Myb-related protein A (MYBL1) from Gallus gallus (Chicken).